Reading from the N-terminus, the 635-residue chain is Biosynthetic arginine decarboxylase (635 aa).

Lys100 carries the post-translational modification N6-(pyridoxal phosphate)lysine. Residue 282 to 292 coordinates substrate; sequence VDIGGGLGVDY.

The protein belongs to the Orn/Lys/Arg decarboxylase class-II family. SpeA subfamily. Mg(2+) is required as a cofactor. The cofactor is pyridoxal 5'-phosphate.

It catalyses the reaction L-arginine + H(+) = agmatine + CO2. It participates in amine and polyamine biosynthesis; agmatine biosynthesis; agmatine from L-arginine: step 1/1. In terms of biological role, catalyzes the biosynthesis of agmatine from arginine. In Geobacter sulfurreducens (strain ATCC 51573 / DSM 12127 / PCA), this protein is Biosynthetic arginine decarboxylase.